The following is a 101-amino-acid chain: Aspartyl/glutamyl-tRNA(Asn/Gln) amidotransferase subunit C (101 aa).

Residues 75 to 101 (QEALSGAPDAEEQRFRVPRILDEDVAS) form a disordered region. Positions 85 to 101 (EEQRFRVPRILDEDVAS) are enriched in basic and acidic residues.

This sequence belongs to the GatC family. Heterotrimer of A, B and C subunits.

The enzyme catalyses L-glutamyl-tRNA(Gln) + L-glutamine + ATP + H2O = L-glutaminyl-tRNA(Gln) + L-glutamate + ADP + phosphate + H(+). It catalyses the reaction L-aspartyl-tRNA(Asn) + L-glutamine + ATP + H2O = L-asparaginyl-tRNA(Asn) + L-glutamate + ADP + phosphate + 2 H(+). Functionally, allows the formation of correctly charged Asn-tRNA(Asn) or Gln-tRNA(Gln) through the transamidation of misacylated Asp-tRNA(Asn) or Glu-tRNA(Gln) in organisms which lack either or both of asparaginyl-tRNA or glutaminyl-tRNA synthetases. The reaction takes place in the presence of glutamine and ATP through an activated phospho-Asp-tRNA(Asn) or phospho-Glu-tRNA(Gln). The protein is Aspartyl/glutamyl-tRNA(Asn/Gln) amidotransferase subunit C of Salinispora arenicola (strain CNS-205).